The sequence spans 212 residues: ATP phosphoribosyltransferase (212 aa).

It belongs to the ATP phosphoribosyltransferase family. Short subfamily. In terms of assembly, heteromultimer composed of HisG and HisZ subunits.

The protein resides in the cytoplasm. The enzyme catalyses 1-(5-phospho-beta-D-ribosyl)-ATP + diphosphate = 5-phospho-alpha-D-ribose 1-diphosphate + ATP. The protein operates within amino-acid biosynthesis; L-histidine biosynthesis; L-histidine from 5-phospho-alpha-D-ribose 1-diphosphate: step 1/9. Functionally, catalyzes the condensation of ATP and 5-phosphoribose 1-diphosphate to form N'-(5'-phosphoribosyl)-ATP (PR-ATP). Has a crucial role in the pathway because the rate of histidine biosynthesis seems to be controlled primarily by regulation of HisG enzymatic activity. This chain is ATP phosphoribosyltransferase, found in Clostridium botulinum (strain ATCC 19397 / Type A).